Here is a 459-residue protein sequence, read N- to C-terminus: Type IV methyl-directed restriction enzyme EcoKMcrB subunit (459 aa).

GTP contacts are provided by residues 201–208 (GPPGVGKT), 300–303 (DKRG), and 333–336 (NTAD).

Recognizes N4- and C5-methylcytosine (and 5-hydroxy-methylcytosines) produced by a broad range of DNA methylases and appears to act against 5-methylcytosine preceded by a purine residue. Binds to DNA containing methylated cytosines; also binds to GTP. Isoform 33 kDa is less active than isoform 51 kDa and may play a role in regulating the activity of isoform 51 kDa by competing with it in DNA and protein binding abilities. The protein is Type IV methyl-directed restriction enzyme EcoKMcrB subunit (mcrB) of Escherichia coli (strain K12).